Here is a 906-residue protein sequence, read N- to C-terminus: Protein translocase subunit SecA (906 aa).

Residues Q86, 104–108, and D511 contribute to the ATP site; that span reads GEGKT. Basic and acidic residues-rich tracts occupy residues 853 to 865 and 877 to 888; these read HESV…RHDE and VRREGPKVKRND. The segment at 853–906 is disordered; the sequence is HESVIDNNQRHDEDEQEEAPKVQQVRREGPKVKRNDPCPCGSGKKYKQCHSKVE. Positions 890, 892, 901, and 902 each coordinate Zn(2+). Basic residues predominate over residues 896 to 906; it reads KKYKQCHSKVE.

The protein belongs to the SecA family. Monomer and homodimer. Part of the essential Sec protein translocation apparatus which comprises SecA, SecYEG and auxiliary proteins SecDF-YajC and YidC. Zn(2+) serves as cofactor.

Its subcellular location is the cell inner membrane. It is found in the cytoplasm. It catalyses the reaction ATP + H2O + cellular proteinSide 1 = ADP + phosphate + cellular proteinSide 2.. Its function is as follows. Part of the Sec protein translocase complex. Interacts with the SecYEG preprotein conducting channel. Has a central role in coupling the hydrolysis of ATP to the transfer of proteins into and across the cell membrane, serving both as a receptor for the preprotein-SecB complex and as an ATP-driven molecular motor driving the stepwise translocation of polypeptide chains across the membrane. This is Protein translocase subunit SecA from Francisella tularensis subsp. tularensis (strain WY96-3418).